Consider the following 152-residue polypeptide: Endoribonuclease YbeY (152 aa).

Residues H113, H117, and H123 each contribute to the Zn(2+) site.

It belongs to the endoribonuclease YbeY family. It depends on Zn(2+) as a cofactor.

It is found in the cytoplasm. Single strand-specific metallo-endoribonuclease involved in late-stage 70S ribosome quality control and in maturation of the 3' terminus of the 16S rRNA. The protein is Endoribonuclease YbeY of Delftia acidovorans (strain DSM 14801 / SPH-1).